Reading from the N-terminus, the 485-residue chain is Arginine/agmatine antiporter (485 aa).

A run of 12 helical transmembrane segments spans residues 12–34, 38–60, 89–111, 126–148, 155–177, 211–230, 243–265, 291–313, 363–385, 400–422, 427–446, and 461–483; these read GTIA…SLPQ, ATAG…FFIA, IGFT…YAVI, GGNT…FIVL, SIIN…ILTA, TMLV…VMSG, VLGF…GSLF, VLMN…IIVA, WNTM…AAFL, IKAP…LIYA, YLFM…IDAG, and IVGM…TGRI.

The protein belongs to the amino acid-polyamine-organocation (APC) superfamily. Basic amino acid/polyamine antiporter (APA) (TC 2.A.3.2) family.

Its subcellular location is the cell inner membrane. In terms of biological role, catalyzes the exchange of L-arginine for agmatine. The arginine uptake by the bacterium in the macrophage may be a virulence factor against the host innate immune response. This Chlamydia pneumoniae (Chlamydophila pneumoniae) protein is Arginine/agmatine antiporter (aaxC).